A 425-amino-acid polypeptide reads, in one-letter code: Threonylcarbamoyladenosine tRNA methylthiotransferase (425 aa).

A Radical SAM core domain is found at 60–295 (RKNELIEVLS…RSYTRYTDER (236 aa)). C74, C78, and C81 together coordinate [4Fe-4S] cluster. In terms of domain architecture, TRAM spans 293-355 (DERIGELHRV…KFSMISKPAS (63 aa)). The chain crosses the membrane as a helical span at residues 362 to 382 (PLSLMHLFPLAVFCLVLITLY).

It belongs to the methylthiotransferase family. CDKAL1 subfamily. [4Fe-4S] cluster serves as cofactor.

The protein resides in the membrane. The catalysed reaction is N(6)-L-threonylcarbamoyladenosine(37) in tRNA + (sulfur carrier)-SH + AH2 + 2 S-adenosyl-L-methionine = 2-methylsulfanyl-N(6)-L-threonylcarbamoyladenosine(37) in tRNA + (sulfur carrier)-H + 5'-deoxyadenosine + L-methionine + A + S-adenosyl-L-homocysteine + 2 H(+). In terms of biological role, catalyzes the methylthiolation of N6-threonylcarbamoyladenosine (t(6)A), leading to the formation of 2-methylthio-N6-threonylcarbamoyladenosine (ms(2)t(6)A) at position 37 in tRNAs that read codons beginning with adenine. This Caenorhabditis elegans protein is Threonylcarbamoyladenosine tRNA methylthiotransferase.